We begin with the raw amino-acid sequence, 963 residues long: TBC1 domain family member 2B (963 aa).

The segment at 1-30 is disordered; it reads MPGAGARAEEGGGGGEGAAQGAAAEPGAGP. The segment covering 19–30 has biased composition (low complexity); that stretch reads AQGAAAEPGAGP. The PH domain occupies 34-139; sequence PARLCGYLQK…WLQELQQKRW (106 aa). Residues Ser-155 and Ser-317 each carry the phosphoserine modification. The interval 272-348 is disordered; it reads EKKKLTPEGN…EMQLQVQSQQ (77 aa). Positions 318-348 are enriched in low complexity; that stretch reads GDPSSEGTSGSGSVSIRKPASEMQLQVQSQQ. Residues 337–535 are a coiled coil; sequence ASEMQLQVQS…AKYSSLEAKL (199 aa). Ser-473 carries the post-translational modification Phosphoserine. In terms of domain architecture, Rab-GAP TBC spans 662-856; that stretch reads GIPHEHRSKV…KIWDSFLYEG (195 aa). Phosphoserine is present on Ser-957.

It localises to the early endosome. GTPase-activating protein that plays a role in the early steps of endocytosis. This chain is TBC1 domain family member 2B (TBC1D2B), found in Homo sapiens (Human).